Consider the following 336-residue polypeptide: Galectin-12 (336 aa).

2 Galectin domains span residues 49–183 and 212–336; these read YVTT…VGFL and CSHA…CVHS.

Not widely expressed. Predominantly expressed in adipose tissue.

The protein localises to the nucleus. Binds lactose. May participate in the apoptosis of adipocytes. The polypeptide is Galectin-12 (LGALS12) (Homo sapiens (Human)).